The following is a 358-amino-acid chain: Feruloyl esterase B (358 aa).

The signal sequence occupies residues 1–18 (MAIPLVLLLAWLLPTVFA). The catalytic stretch occupies residues 19–291 (ASLTQVSNFG…VSVVLDWFGI (273 aa)). The active-site Charge relay system is Ser136. N-linked (GlcNAc...) asparagine glycosylation is found at Asn179 and Asn246. Residues 292–321 (TGGGGGNGGGSGSTTTTTSATTTSTGPTGG) are gly/Thr-rich linker. The disordered stretch occupies residues 297 to 318 (GNGGGSGSTTTTTSATTTSTGP). Positions 304–318 (STTTTTSATTTSTGP) are enriched in low complexity. In terms of domain architecture, CBM1 spans 322–358 (CTAAHWDQCGGNGYTGCTSCASPYTCQKVNDYYSQCL).

It belongs to the carbohydrate esterase 1 (CE1) family. Feruloyl esterase type B subfamily.

Its subcellular location is the secreted. It catalyses the reaction feruloyl-polysaccharide + H2O = ferulate + polysaccharide.. In terms of biological role, involved in degradation of plant cell walls. Hydrolyzes the feruloyl-arabinose ester bond in arabinoxylans as well as the feruloyl-galactose and feruloyl-arabinose ester bonds in pectin. Active against methyl esters of caffeate (MCA), but not sinapate (MSA). This Talaromyces stipitatus (strain ATCC 10500 / CBS 375.48 / QM 6759 / NRRL 1006) (Penicillium stipitatum) protein is Feruloyl esterase B (faeB).